We begin with the raw amino-acid sequence, 255 residues long: uncharacterized protein (255 aa).

The a divalent metal cation site is built by His-6, His-8, Glu-92, His-128, His-153, and Asp-203.

It belongs to the metallo-dependent hydrolases superfamily. TatD-type hydrolase family. It depends on a divalent metal cation as a cofactor.

This is an uncharacterized protein from Bacillus subtilis (strain 168).